Reading from the N-terminus, the 115-residue chain is Phosphoribosyl-AMP cyclohydrolase (115 aa).

Asp-80 contacts Mg(2+). Residue Cys-81 coordinates Zn(2+). Residues Asp-82 and Asp-84 each coordinate Mg(2+). Residues Cys-97 and Cys-104 each coordinate Zn(2+).

Belongs to the PRA-CH family. As to quaternary structure, homodimer. Requires Mg(2+) as cofactor. Zn(2+) is required as a cofactor.

The protein localises to the cytoplasm. The catalysed reaction is 1-(5-phospho-beta-D-ribosyl)-5'-AMP + H2O = 1-(5-phospho-beta-D-ribosyl)-5-[(5-phospho-beta-D-ribosylamino)methylideneamino]imidazole-4-carboxamide. It functions in the pathway amino-acid biosynthesis; L-histidine biosynthesis; L-histidine from 5-phospho-alpha-D-ribose 1-diphosphate: step 3/9. Its function is as follows. Catalyzes the hydrolysis of the adenine ring of phosphoribosyl-AMP. This is Phosphoribosyl-AMP cyclohydrolase from Mycobacterium bovis (strain ATCC BAA-935 / AF2122/97).